The sequence spans 341 residues: Phosphate acyltransferase (341 aa).

This sequence belongs to the PlsX family. Homodimer. Probably interacts with PlsY.

The protein localises to the cytoplasm. The enzyme catalyses a fatty acyl-[ACP] + phosphate = an acyl phosphate + holo-[ACP]. Its pathway is lipid metabolism; phospholipid metabolism. Functionally, catalyzes the reversible formation of acyl-phosphate (acyl-PO(4)) from acyl-[acyl-carrier-protein] (acyl-ACP). This enzyme utilizes acyl-ACP as fatty acyl donor, but not acyl-CoA. The protein is Phosphate acyltransferase of Vibrio campbellii (strain ATCC BAA-1116).